The chain runs to 185 residues: MIKSVIAGAVAMAVVSFGVNNAAPTIPQGQGKVTFNGTVVDAPCSISQKSADQSIDFGQLSKSFLEAGGVSKPMDLDIELVNCDITAFKGGNGAKKGTVKLAFTGPIVNGHSDELDTNGGTGTAIVVQGAGKNVVFDGSEGDANTLKDGENVLHYTAVVKKSSAVGAAVTEGAFSAVANFNLTYQ.

A signal peptide spans 1-22; sequence MIKSVIAGAVAMAVVSFGVNNA. A disulfide bridge links cysteine 44 with cysteine 83.

It belongs to the fimbrial protein family.

The protein resides in the secreted. Its subcellular location is the fimbrium. Its function is as follows. Polymerizes to form the thick (6.8 nm in diameter) rod of the pilus (also called fimbria). The rod is a right-handed helical cylinder with 3.28 PapA subunits per turn. Pili are polar filaments radiating from the surface of the bacterium to a length of 0.5-1.5 micrometers and numbering 100-300 per cell, and enable bacteria to colonize the epithelium of specific host organs. The protein is Pap fimbrial major pilin protein (papA) of Escherichia coli.